We begin with the raw amino-acid sequence, 237 residues long: Carbohydrate deacetylase (237 aa).

Mg(2+) is bound by residues H59 and H125.

The protein belongs to the YdjC deacetylase family. Mg(2+) is required as a cofactor.

Probably catalyzes the deacetylation of acetylated carbohydrates an important step in the degradation of oligosaccharides. The polypeptide is Carbohydrate deacetylase (Halalkalibacterium halodurans (strain ATCC BAA-125 / DSM 18197 / FERM 7344 / JCM 9153 / C-125) (Bacillus halodurans)).